We begin with the raw amino-acid sequence, 495 residues long: Aspartyl/glutamyl-tRNA(Asn/Gln) amidotransferase subunit B (495 aa).

This sequence belongs to the GatB/GatE family. GatB subfamily. In terms of assembly, heterotrimer of A, B and C subunits.

It catalyses the reaction L-glutamyl-tRNA(Gln) + L-glutamine + ATP + H2O = L-glutaminyl-tRNA(Gln) + L-glutamate + ADP + phosphate + H(+). It carries out the reaction L-aspartyl-tRNA(Asn) + L-glutamine + ATP + H2O = L-asparaginyl-tRNA(Asn) + L-glutamate + ADP + phosphate + 2 H(+). Allows the formation of correctly charged Asn-tRNA(Asn) or Gln-tRNA(Gln) through the transamidation of misacylated Asp-tRNA(Asn) or Glu-tRNA(Gln) in organisms which lack either or both of asparaginyl-tRNA or glutaminyl-tRNA synthetases. The reaction takes place in the presence of glutamine and ATP through an activated phospho-Asp-tRNA(Asn) or phospho-Glu-tRNA(Gln). This is Aspartyl/glutamyl-tRNA(Asn/Gln) amidotransferase subunit B from Crocosphaera subtropica (strain ATCC 51142 / BH68) (Cyanothece sp. (strain ATCC 51142)).